Consider the following 156-residue polypeptide: SsrA-binding protein (156 aa).

A disordered region spans residues 130 to 156 (KFDKRDDLKKKDAKRDIDRALRDKQKY). A compositionally biased stretch (basic and acidic residues) spans 132–156 (DKRDDLKKKDAKRDIDRALRDKQKY).

The protein belongs to the SmpB family.

It localises to the cytoplasm. Functionally, required for rescue of stalled ribosomes mediated by trans-translation. Binds to transfer-messenger RNA (tmRNA), required for stable association of tmRNA with ribosomes. tmRNA and SmpB together mimic tRNA shape, replacing the anticodon stem-loop with SmpB. tmRNA is encoded by the ssrA gene; the 2 termini fold to resemble tRNA(Ala) and it encodes a 'tag peptide', a short internal open reading frame. During trans-translation Ala-aminoacylated tmRNA acts like a tRNA, entering the A-site of stalled ribosomes, displacing the stalled mRNA. The ribosome then switches to translate the ORF on the tmRNA; the nascent peptide is terminated with the 'tag peptide' encoded by the tmRNA and targeted for degradation. The ribosome is freed to recommence translation, which seems to be the essential function of trans-translation. This Exiguobacterium sibiricum (strain DSM 17290 / CCUG 55495 / CIP 109462 / JCM 13490 / 255-15) protein is SsrA-binding protein.